The sequence spans 389 residues: MTMKMSYRKSNIYLSLVNSYMIDSPQPSSINYWWNMGSLLGLCLVIQICTGIFLAMHYSSNIELAFSSVEHIMRDVQYGWLIRYMHANGASFFFMCMYTHIAKGLYYGSYKSPRVTVWTVGVIIFVLTMAAAFLGYCCVYGQMSHWGATVITNLFSAIPFIGKDIVLWLWGGFSVSNPTIQRFFAFHYLVPFIIAAVVIMHMMALHTHGSSNPLGITGNLDRIPMHGYFVFKDLITVFVFMILFSLFVFYSPNTLGHPDNYIPGNPLVTPASIVPEWYLLPFYAILRSIPDKLLGVITMFAAILVLLVLPITDRSVVRGNSFKVLSKFFFFIFVFNFVLLGIIGMQHVEVPFVLIGQISTGIYFAYFIIIVPVISMIENVLFYIGRVSK.

4 consecutive transmembrane segments (helical) span residues 36–56, 80–102, 117–137, and 183–203; these read MGSL…FLAM, WLIR…THIA, VWTV…LGYC, and FFAF…MHMM. Heme b-binding residues include His86 and His100. Heme b contacts are provided by His187 and His201. A ubiquinone is bound at residue His206. 4 helical membrane passes run 229 to 249, 293 to 313, 325 to 345, and 352 to 372; these read FVFK…LFVF, LLGV…PITD, LSKF…IIGM, and FVLI…IIVP.

Belongs to the cytochrome b family. Fungal cytochrome b-c1 complex contains 10 subunits; 3 respiratory subunits, 2 core proteins and 5 low-molecular weight proteins. Cytochrome b-c1 complex is a homodimer. It depends on heme b as a cofactor.

The protein localises to the mitochondrion inner membrane. Component of the ubiquinol-cytochrome c reductase complex (complex III or cytochrome b-c1 complex) that is part of the mitochondrial respiratory chain. The b-c1 complex mediates electron transfer from ubiquinol to cytochrome c. Contributes to the generation of a proton gradient across the mitochondrial membrane that is then used for ATP synthesis. The polypeptide is Cytochrome b (COB) (Vanderwaltozyma polyspora (strain ATCC 22028 / DSM 70294 / BCRC 21397 / CBS 2163 / NBRC 10782 / NRRL Y-8283 / UCD 57-17) (Kluyveromyces polysporus)).